A 399-amino-acid polypeptide reads, in one-letter code: Glycerate 2-kinase (399 aa).

Lys-48 is a substrate binding site.

The protein belongs to the glycerate kinase type-1 family. Homodimer. The cofactor is Mg(2+). Ni(2+) serves as cofactor. It depends on Mn(2+) as a cofactor. Requires Co(2+) as cofactor. Ca(2+) is required as a cofactor. The cofactor is Zn(2+). Sr(2+) serves as cofactor.

The enzyme catalyses (R)-glycerate + ATP = (2R)-2-phosphoglycerate + ADP + H(+). Catalyzes the ATP-dependent phosphorylation of D-glycerate to 2-phosphoglycerate. It can also utilize GTP, CTP, UTP, ADP, AMP or pyrophosphate as phosphate donor. The polypeptide is Glycerate 2-kinase (gck) (Sulfurisphaera tokodaii (strain DSM 16993 / JCM 10545 / NBRC 100140 / 7) (Sulfolobus tokodaii)).